Reading from the N-terminus, the 385-residue chain is Lipid-A-disaccharide synthase 2 (385 aa).

Belongs to the LpxB family.

It catalyses the reaction a lipid X + a UDP-2-N,3-O-bis[(3R)-3-hydroxyacyl]-alpha-D-glucosamine = a lipid A disaccharide + UDP + H(+). It functions in the pathway bacterial outer membrane biogenesis; LPS lipid A biosynthesis. Its function is as follows. Condensation of UDP-2,3-diacylglucosamine and 2,3-diacylglucosamine-1-phosphate to form lipid A disaccharide, a precursor of lipid A, a phosphorylated glycolipid that anchors the lipopolysaccharide to the outer membrane of the cell. This Legionella pneumophila subsp. pneumophila (strain Philadelphia 1 / ATCC 33152 / DSM 7513) protein is Lipid-A-disaccharide synthase 2.